The sequence spans 545 residues: MATDAALRRLLRLHRTEIAVAVDSAFPLLHALADHDVVPEDKFQETLHLKEKEGCPQAFHALLSWLLTQDSTAILDFWRVLFKDYNLERYGRLQPILDSFPKDVDLSQPRKGRKPPAVPKALVPPPRLPTKRKASEEARAAAPAALTPRGTASPGSQLKAKPPKKPESSAEQQRLPLGNGIQTMSASVQRAVAMSSGDVPGARGAVEGILIQQVFESGGSKKCIQVGGEFYTPSKFEDSGSGKNKARSSSGPKPLVRAKGAQGAAPGGGEARLGQQGSVPAPLALPSDPQLHQKNEDECAVCRDGGELICCDGCPRAFHLACLSPPLREIPSGTWRCSSCLQATVQEVQPRAEEPRPQEPPVETPLPPGLRSAGEEVRGPPGEPLAGMDTTLVYKHLPAPPSAAPLPGLDSSALHPLLCVGPEGQQNLAPGARCGVCGDGTDVLRCTHCAAAFHWRCHFPAGTSRPGTGLRCRSCSGDVTPAPVEGVLAPSPARLAPGPAKDDTASHEPALHRDDLESLLSEHTFDGILQWAIQSMARPAAPFPS.

An HSR domain is found at 1 to 105 (MATDAALRRL…ILDSFPKDVD (105 aa)). 2 consecutive short sequence motifs (LXXLL motif) follow at residues 7–11 (LRRLL) and 63–67 (LSWLL). 2 disordered regions span residues 101–178 (PKDV…LPLG) and 234–290 (SKFE…SDPQ). Positions 116–128 (PAVPKALVPPPRL) are enriched in pro residues. The span at 140–152 (AAAPAALTPRGTA) shows a compositional bias: low complexity. The 100-residue stretch at 181 to 280 (IQTMSASVQR…ARLGQQGSVP (100 aa)) folds into the SAND domain. Interaction with histone H3 not methylated at 'Lys-4' regions lie at residues 295–298 (NEDE), 304–312 (DGGELICCD), and 331–335 (PSGTW). The PHD-type 1 zinc finger occupies 296–343 (EDECAVCRDGGELICCDGCPRAFHLACLSPPLREIPSGTWRCSSCLQA). Residues 348-382 (VQPRAEEPRPQEPPVETPLPPGLRSAGEEVRGPPG) are disordered. Positions 358–368 (QEPPVETPLPP) are enriched in pro residues. Residues 414 to 418 (LHPLL) carry the LXXLL motif 3 motif. The segment at 434-475 (CGVCGDGTDVLRCTHCAAAFHWRCHFPAGTSRPGTGLRCRSC) adopts a PHD-type 2 zinc-finger fold. The disordered stretch occupies residues 489–508 (APSPARLAPGPAKDDTASHE). The LXXLL motif 4 signature appears at 516–520 (LESLL).

Homodimer and homotetramer. Interacts with CREBBP. Interacts preferentially with histone H3 that is not methylated at 'Lys-4'. Binds with lower affinity to histone H3 that is monomethylated at 'Lys-4'. Trimethylation of histone H3 at 'Lys-4' or phosphorylation at 'Thr-3' abolish the interaction. Binds with lower affinity to histone H3 that is acetylated at 'Lys-4', or that is acetylated at 'Lys-9' or trimethylated at 'Lys-9'. Binds histone H3 that is dimethylated at 'Arg-2' with very low affinity. Post-translationally, phosphorylated. Phosphorylation could trigger oligomerization. In terms of tissue distribution, widely expressed. Expressed at higher level in thymus (medullary epithelial cells and monocyte-dendritic cells), pancreas, adrenal cortex and testis. Expressed at lower level in the spleen, fetal liver and lymph nodes. In secondary lymphoid organs, expressed in a discrete population of bone marrow-derived toleregenic antigen presenting cells (APCs) called extrathymic AIRE expressing cells (eTAC)(at protein level). Isoform 2 and isoform 3 seem to be less frequently expressed than isoform 1, if at all.

The protein resides in the nucleus. It is found in the cytoplasm. Its function is as follows. Transcription factor playing an essential role to promote self-tolerance in the thymus by regulating the expression of a wide array of self-antigens that have the commonality of being tissue-restricted in their expression pattern in the periphery, called tissue restricted antigens (TRA). Binds to G-doublets in an A/T-rich environment; the preferred motif is a tandem repeat of 5'-ATTGGTTA-3' combined with a 5'-TTATTA-3' box. Binds to nucleosomes. Binds to chromatin and interacts selectively with histone H3 that is not methylated at 'Lys-4', not phosphorylated at 'Thr-3' and not methylated at 'Arg-2'. Functions as a sensor of histone H3 modifications that are important for the epigenetic regulation of gene expression. Mainly expressed by medullary thymic epithelial cells (mTECs), induces the expression of thousands of tissue-restricted proteins, which are presented on major histocompatibility complex class I (MHC-I) and MHC-II molecules to developing T-cells percolating through the thymic medulla. Also induces self-tolerance through other mechanisms such as the regulation of the mTEC differentiation program. Controls the medullary accumulation of thymic dendritic cells and the development of regulatory T-cell through the regulation of XCL1 expression. Regulates the production of CCR4 and CCR7 ligands in medullary thymic epithelial cells and alters the coordinated maturation and migration of thymocytes. In thimic B-cells, allows the presentation of licensing-dependent endogenous self-anitgen for negative selection. In secondary lymphoid organs, induces functional inactivation of CD4(+) T-cells. Expressed by a distinct bone marrow-derived population, induces self-tolerance through a mechanism that does not require regulatory T-cells and is resitant to innate inflammatory stimuli. The sequence is that of Autoimmune regulator (AIRE) from Homo sapiens (Human).